Consider the following 122-residue polypeptide: MARIAGVNIPTNKRVVIALQYIHGIGPKFAREIVTKVGIADDRRVNQLSDAEVLQIREAIDADYQVEGDLRREVSMNIKRLMDLGCYRGLRHRRSLPVRGQRTHTNARTRKGPAKAIAGKKK.

The tract at residues 97 to 122 (PVRGQRTHTNARTRKGPAKAIAGKKK) is disordered.

The protein belongs to the universal ribosomal protein uS13 family. As to quaternary structure, part of the 30S ribosomal subunit. Forms a loose heterodimer with protein S19. Forms two bridges to the 50S subunit in the 70S ribosome.

Located at the top of the head of the 30S subunit, it contacts several helices of the 16S rRNA. In the 70S ribosome it contacts the 23S rRNA (bridge B1a) and protein L5 of the 50S subunit (bridge B1b), connecting the 2 subunits; these bridges are implicated in subunit movement. Contacts the tRNAs in the A and P-sites. This chain is Small ribosomal subunit protein uS13, found in Brucella anthropi (strain ATCC 49188 / DSM 6882 / CCUG 24695 / JCM 21032 / LMG 3331 / NBRC 15819 / NCTC 12168 / Alc 37) (Ochrobactrum anthropi).